A 51-amino-acid polypeptide reads, in one-letter code: Large ribosomal subunit protein bL33 (51 aa).

The protein belongs to the bacterial ribosomal protein bL33 family.

This chain is Large ribosomal subunit protein bL33, found in Hahella chejuensis (strain KCTC 2396).